Here is a 321-residue protein sequence, read N- to C-terminus: UDP-3-O-acylglucosamine N-acyltransferase (321 aa).

Residue histidine 231 is the Proton acceptor of the active site.

It belongs to the transferase hexapeptide repeat family. LpxD subfamily. Homotrimer.

It catalyses the reaction a UDP-3-O-[(3R)-3-hydroxyacyl]-alpha-D-glucosamine + a (3R)-hydroxyacyl-[ACP] = a UDP-2-N,3-O-bis[(3R)-3-hydroxyacyl]-alpha-D-glucosamine + holo-[ACP] + H(+). Its pathway is bacterial outer membrane biogenesis; LPS lipid A biosynthesis. Catalyzes the N-acylation of UDP-3-O-acylglucosamine using 3-hydroxyacyl-ACP as the acyl donor. Is involved in the biosynthesis of lipid A, a phosphorylated glycolipid that anchors the lipopolysaccharide to the outer membrane of the cell. This chain is UDP-3-O-acylglucosamine N-acyltransferase, found in Campylobacter jejuni subsp. jejuni serotype O:2 (strain ATCC 700819 / NCTC 11168).